Here is a 589-residue protein sequence, read N- to C-terminus: Delta-like protein 3 (589 aa).

The signal sequence occupies residues 1-32; sequence MVSLQVSSLPQTLILAFLLPQALPAGVFELQI. Over 33–494 the chain is Extracellular; it reads HSFGPGPGPG…LRQADSQRFL (462 aa). A DSL domain is found at 174-213; that stretch reads ARCEPPAVGAACARLCRSRSAPSRCGPGLRPCTPFPDECE. 6 EGF-like domains span residues 218-251, 276-312, 314-353, 355-391, 393-429, and 431-467; these read SLTVCRAGCSPEHGYCEEPDECHCLEGWTGPLCT, GPGPCDGNPCANGGSCSETPGSFECACPRGFYGPRCE, SGVTCADGPCFNGGLCVGGEDPDSAYVCHCPPAFQGSNCE, RVDRCSLQPCQNGGLCLDLGHALRCRCRAGFAGPRCE, DLDDCAGRACANGGTCVEGGGARRCSCALGFGGRDCR, and RADPCASRPCAHGGRCYAHFSGLVCACAPGYMGVRCE. 18 disulfide bridges follow: C222-C233, C226-C239, C241-C250, C280-C291, C285-C300, C302-C311, C318-C329, C323-C341, C343-C352, C359-C370, C364-C379, C381-C390, C397-C408, C402-C417, C419-C428, C435-C446, C440-C455, and C457-C466. The helical transmembrane segment at 495–515 threads the bilayer; the sequence is LPPALGLLAAAALAGAALLLI. The Cytoplasmic segment spans residues 516-589; that stretch reads HVRRRGPGRD…PAPSIYAREA (74 aa). The disordered stretch occupies residues 552 to 574; that stretch reads QDGAGDGPTSSADWNHPEDGDSR.

In terms of assembly, can bind and activate Notch-1 or another Notch receptor. Post-translationally, ubiquitinated by MIB (MIB1 or MIB2), leading to its endocytosis and subsequent degradation.

It is found in the membrane. In terms of biological role, inhibits primary neurogenesis. May be required to divert neurons along a specific differentiation pathway. Plays a role in the formation of somite boundaries during segmentation of the paraxial mesoderm. The protein is Delta-like protein 3 (Dll3) of Rattus norvegicus (Rat).